The following is a 299-amino-acid chain: GTPase Era (299 aa).

The 168-residue stretch at 5 to 172 folds into the Era-type G domain; that stretch reads KSGFVSIIGR…IDVLKTYLPE (168 aa). The tract at residues 13–20 is G1; sequence GRPNVGKS. 13 to 20 is a GTP binding site; the sequence is GRPNVGKS. A G2 region spans residues 39 to 43; that stretch reads QTTRN. The interval 60–63 is G3; sequence DTPG. GTP-binding positions include 60-64 and 122-125; these read DTPGI and NKID. The interval 122–125 is G4; sequence NKID. Residues 151-153 form a G5 region; that stretch reads ISA. The region spanning 203–280 is the KH type-2 domain; that stretch reads TSEEIPHAIG…YLELWVKVQR (78 aa).

It belongs to the TRAFAC class TrmE-Era-EngA-EngB-Septin-like GTPase superfamily. Era GTPase family. Monomer.

The protein localises to the cytoplasm. The protein resides in the cell membrane. An essential GTPase that binds both GDP and GTP, with rapid nucleotide exchange. Plays a role in 16S rRNA processing and 30S ribosomal subunit biogenesis and possibly also in cell cycle regulation and energy metabolism. The chain is GTPase Era from Staphylococcus aureus (strain bovine RF122 / ET3-1).